Reading from the N-terminus, the 173-residue chain is Protein FAM180A (173 aa).

Residues 1–17 (MHWKMLLLLLLYYNAEA) form the signal peptide.

Belongs to the FAM180 family.

The protein localises to the secreted. The sequence is that of Protein FAM180A (FAM180A) from Homo sapiens (Human).